Reading from the N-terminus, the 77-residue chain is Large ribosomal subunit protein bL28 (77 aa).

It belongs to the bacterial ribosomal protein bL28 family.

This is Large ribosomal subunit protein bL28 from Cupriavidus necator (strain ATCC 17699 / DSM 428 / KCTC 22496 / NCIMB 10442 / H16 / Stanier 337) (Ralstonia eutropha).